The following is a 509-amino-acid chain: Maturase K (509 aa).

Belongs to the intron maturase 2 family. MatK subfamily.

It localises to the plastid. Its subcellular location is the chloroplast. Functionally, usually encoded in the trnK tRNA gene intron. Probably assists in splicing its own and other chloroplast group II introns. This is Maturase K from Clematis florida (Asian virgin's bower).